A 778-amino-acid chain; its full sequence is MIVGYRSTIITLSHPKLGNGKTISSNAIFQRSCRVRCSHSTTSSMNGFEDARDRIRESFGKLELSPSSYDTAWVAMVPSRHSLNEPCFPQCLDWIIENQREDGSWGLNPTHPLLLKDSLSSTLACLLALTKWRVGDEQIKRGLGFIETYGWAVDNKDQISPLGFEVIFSSMIKSAEKLDLNLPLNLHLVNLVKCKRDSTIKRNVEYMGEGVGELCDWKEMIKLHQRQNGSLFDSPATTAAALIYHQHDQKCYQYLNSIFQQHKNWVPTMYPTKVHSLLCLVDTLQNLGVHRHFKSEIKKALDEIYRLWQQKNEQIFSNVTHCAMAFRLLRMSYYDVSSDELAEFVDEEHFFATNGKYKSHVEILELHKASQLAIDHEKDDILDKINNWTRAFMEQKLLNNGFIDRMSKKEVELALRKFYTTSHLAENRRYIKSYEENNFKILKAAYRSPNINNKDLLAFSIHDFELCQAQHREELQQLKRWFEDYRLDQLGLAERYIHASYLFGVTVIPEPELSDARLMYAKYVMLLTIVDDHFESFASKDECFNIIELVERWDDYASVGYKSEKVKVFFSVFYKSIEELATIAEIKQGRSVKNHLINLWLELMKLMLMERVEWCSGKTIPSIEEYLYVTSITFCAKLIPLSTQYFLGIKISKDLLESDEICGLWNCSGRVMRILNDLQDSKREQKEVSINLVTLLMKSMSEEEAIMKIKEILEMNRRELLKMVLVQKKGSQLPQLCKDIFWRTSKWAHFTYSQTDGYRIAEEMKNHIDEVFYKPLNH.

Residues 1–36 constitute a chloroplast transit peptide; the sequence is MIVGYRSTIITLSHPKLGNGKTISSNAIFQRSCRVR. Mg(2+) contacts are provided by Asp-531, Asn-676, and Glu-684. Positions 531–535 match the DDXXD motif motif; it reads DDHFE.

It belongs to the terpene synthase family. Tpse subfamily. The cofactor is Mg(2+). Trichomes.

Its subcellular location is the plastid. The protein resides in the chloroplast. The catalysed reaction is neryl diphosphate = beta-phellandrene + diphosphate. In terms of biological role, monoterpene synthase catalyzing the production of beta-phellandrene from neryl diphosphate. Also produces lower amounts of delta-2-carene, alpha-phellandrene and limonene. When incubated in vitro with geranyl diphosphate, catalyzes the formation of acyclic myrcene and ocimene as major products in addition to beta-phellandrene. In Solanum lycopersicum (Tomato), this protein is Beta-phellandrene synthase (neryl-diphosphate-cyclizing), chloroplastic (PHS1).